The following is a 416-amino-acid chain: S-adenosylmethionine synthase (416 aa).

ATP is bound at residue histidine 16. Position 18 (aspartate 18) interacts with Mg(2+). Glutamate 44 is a binding site for K(+). Positions 57 and 100 each coordinate L-methionine. The segment at 100–110 is flexible loop; the sequence is QSPDIAQGVTQ. ATP-binding positions include 175–177, 251–252, aspartate 260, 266–267, alanine 283, and lysine 287; these read DGK, KF, and RK. Residue aspartate 260 participates in L-methionine binding. Position 291 (lysine 291) interacts with L-methionine.

This sequence belongs to the AdoMet synthase family. Homotetramer; dimer of dimers. Mg(2+) serves as cofactor. K(+) is required as a cofactor.

The protein resides in the cytoplasm. It carries out the reaction L-methionine + ATP + H2O = S-adenosyl-L-methionine + phosphate + diphosphate. It functions in the pathway amino-acid biosynthesis; S-adenosyl-L-methionine biosynthesis; S-adenosyl-L-methionine from L-methionine: step 1/1. Functionally, catalyzes the formation of S-adenosylmethionine (AdoMet) from methionine and ATP. The overall synthetic reaction is composed of two sequential steps, AdoMet formation and the subsequent tripolyphosphate hydrolysis which occurs prior to release of AdoMet from the enzyme. This is S-adenosylmethionine synthase from Crocosphaera subtropica (strain ATCC 51142 / BH68) (Cyanothece sp. (strain ATCC 51142)).